The following is a 276-amino-acid chain: Diaminopimelate epimerase (276 aa).

3 residues coordinate substrate: N13, Q46, and N66. C75 acts as the Proton donor in catalysis. Residues 76–77 (GN), N159, N192, and 210–211 (ER) each bind substrate. C219 serves as the catalytic Proton acceptor. 220–221 (GT) serves as a coordination point for substrate.

It belongs to the diaminopimelate epimerase family. Homodimer.

Its subcellular location is the cytoplasm. The enzyme catalyses (2S,6S)-2,6-diaminopimelate = meso-2,6-diaminopimelate. It participates in amino-acid biosynthesis; L-lysine biosynthesis via DAP pathway; DL-2,6-diaminopimelate from LL-2,6-diaminopimelate: step 1/1. Its function is as follows. Catalyzes the stereoinversion of LL-2,6-diaminopimelate (L,L-DAP) to meso-diaminopimelate (meso-DAP), a precursor of L-lysine and an essential component of the bacterial peptidoglycan. The protein is Diaminopimelate epimerase of Pseudomonas aeruginosa (strain LESB58).